The following is a 421-amino-acid chain: D-amino acid dehydrogenase (421 aa).

3–17 contributes to the FAD binding site; it reads VIVLGSGVIGVASAY.

The protein belongs to the DadA oxidoreductase family. The cofactor is FAD.

The enzyme catalyses a D-alpha-amino acid + A + H2O = a 2-oxocarboxylate + AH2 + NH4(+). It participates in amino-acid degradation; D-alanine degradation; NH(3) and pyruvate from D-alanine: step 1/1. Functionally, oxidative deamination of D-amino acids. In Acinetobacter baumannii (strain SDF), this protein is D-amino acid dehydrogenase.